Here is a 572-residue protein sequence, read N- to C-terminus: NADP-dependent malic enzyme (572 aa).

At M1 the chain carries N-acetylmethionine. Catalysis depends on Y102, which acts as the Proton donor. An NADP(+)-binding site is contributed by R155. Residue K173 is the Proton acceptor of the active site. A divalent metal cation contacts are provided by E245, D246, and D269. NADP(+) contacts are provided by residues D269 and G301–E318. The residue at position 336 (S336) is a Phosphoserine. N408 is a binding site for NADP(+).

Belongs to the malic enzymes family. Homotetramer. It depends on Mg(2+) as a cofactor. Mn(2+) serves as cofactor. In terms of tissue distribution, expressed in all tissues tested including liver, placenta and white adipose tissue.

It is found in the cytoplasm. It catalyses the reaction (S)-malate + NADP(+) = pyruvate + CO2 + NADPH. It carries out the reaction oxaloacetate + H(+) = pyruvate + CO2. Functionally, catalyzes the oxidative decarboxylation of (S)-malate in the presence of NADP(+) and divalent metal ions, and decarboxylation of oxaloacetate. The protein is NADP-dependent malic enzyme of Homo sapiens (Human).